A 294-amino-acid polypeptide reads, in one-letter code: Cyclin-G1 (294 aa).

The protein belongs to the cyclin family. Cyclin G subfamily.

Its subcellular location is the nucleus. In terms of biological role, may play a role in growth regulation. Is associated with G2/M phase arrest in response to DNA damage. May be an intermediate by which p53 mediates its role as an inhibitor of cellular proliferation. The chain is Cyclin-G1 (Ccng1) from Rattus norvegicus (Rat).